Reading from the N-terminus, the 86-residue chain is Exodeoxyribonuclease 7 small subunit (86 aa).

The disordered stretch occupies residues 1–26 (MQDELFETEKIPPKNTKNTKNAPKKS).

The protein belongs to the XseB family. Heterooligomer composed of large and small subunits.

Its subcellular location is the cytoplasm. The catalysed reaction is Exonucleolytic cleavage in either 5'- to 3'- or 3'- to 5'-direction to yield nucleoside 5'-phosphates.. Functionally, bidirectionally degrades single-stranded DNA into large acid-insoluble oligonucleotides, which are then degraded further into small acid-soluble oligonucleotides. The polypeptide is Exodeoxyribonuclease 7 small subunit (Helicobacter pylori (strain ATCC 700392 / 26695) (Campylobacter pylori)).